The chain runs to 394 residues: Ribulose bisphosphate carboxylase large chain (394 aa).

Lys-5 is modified (N6,N6,N6-trimethyllysine). Substrate contacts are provided by Asn-114 and Thr-164. Lys-166 acts as the Proton acceptor in catalysis. Residue Lys-168 coordinates substrate. Lys-192, Asp-194, and Glu-195 together coordinate Mg(2+). Lys-192 carries the N6-carboxylysine modification. Catalysis depends on His-285, which acts as the Proton acceptor. Substrate-binding residues include Arg-286, His-318, and Ser-370.

Belongs to the RuBisCO large chain family. Type I subfamily. Heterohexadecamer of 8 large chains and 8 small chains; disulfide-linked. The disulfide link is formed within the large subunit homodimers. The cofactor is Mg(2+). The disulfide bond which can form in the large chain dimeric partners within the hexadecamer appears to be associated with oxidative stress and protein turnover.

Its subcellular location is the plastid. It localises to the chloroplast. The enzyme catalyses 2 (2R)-3-phosphoglycerate + 2 H(+) = D-ribulose 1,5-bisphosphate + CO2 + H2O. The catalysed reaction is D-ribulose 1,5-bisphosphate + O2 = 2-phosphoglycolate + (2R)-3-phosphoglycerate + 2 H(+). RuBisCO catalyzes two reactions: the carboxylation of D-ribulose 1,5-bisphosphate, the primary event in carbon dioxide fixation, as well as the oxidative fragmentation of the pentose substrate in the photorespiration process. Both reactions occur simultaneously and in competition at the same active site. The sequence is that of Ribulose bisphosphate carboxylase large chain (rbcL) from Alisma plantago-aquatica (Common water-plantain).